Reading from the N-terminus, the 1414-residue chain is Calcium-transporting ATPase 2 (1414 aa).

2 disordered regions span residues 1–231 (MSRN…PSRL) and 265–294 (AVGT…QWRA). Over 1-327 (MSRNNPPPVI…LLMWLAFKDK (327 aa)) the chain is Cytoplasmic. Low complexity-rich tracts occupy residues 33–53 (PTPT…PESP) and 75–96 (SPTP…SSSS). Residues 179–189 (DGDRGEDDANK) are compositionally biased toward basic and acidic residues. Over residues 190-201 (KGKKDKKGKKGK) the composition is skewed to basic residues. Basic and acidic residues predominate over residues 202-229 (KDKEEPPSAHLDPDKDKTDPTPFREKPS). Residues 328 to 348 (VLILLSVAAVVSLALGLYQDL) traverse the membrane as a helical segment. Over 349-370 (GTPPKIIYNDECPDGCEEAQVD) the chain is Vacuolar. Residues 371-391 (WVEGVAIVVAIIIVVLVGSIN) form a helical membrane-spanning segment. Over 392-541 (DWQKERQFKK…TPLQIKLNHL (150 aa)) the chain is Cytoplasmic. A helical membrane pass occupies residues 542–562 (AELIAKLGGASGLLLFIALMI). Residues 563 to 585 (RFFVQLKTNPDRSANDKAQSFIQ) are Vacuolar-facing. A helical transmembrane segment spans residues 586–606 (ILIIAVTLVVVAVPEGLPLAV). Valine 595 and glutamate 600 together coordinate Ca(2+). The Cytoplasmic segment spans residues 607-1040 (TLALAFATKR…GRCVNDSVKK (434 aa)). The 4-aspartylphosphate intermediate role is filled by aspartate 642. Aspartate 642 and threonine 644 together coordinate Mg(2+). Residues threonine 644, glutamate 737, arginine 779, 909 to 911 (TGD), arginine 958, and lysine 964 contribute to the ATP site. Aspartate 983 serves as a coordination point for Mg(2+). Asparagine 986 lines the ATP pocket. The helical transmembrane segment at 1041–1061 (FLQFQISVNITAVFITFISAV) threads the bilayer. Asparagine 1049 contributes to the Ca(2+) binding site. The Vacuolar segment spans residues 1062–1068 (ASSSEES). Residues 1069–1089 (VLTAVQLLWVNLIMDTFAALA) traverse the membrane as a helical segment. 2 residues coordinate Ca(2+): asparagine 1079 and aspartate 1083. Over 1090 to 1118 (LATDPATESSLDRKPDRKNAPLITVEMFK) the chain is Cytoplasmic. Residues 1119–1139 (MIMVQAIYQIIVCLVLHFAGL) form a helical membrane-spanning segment. The Vacuolar portion of the chain corresponds to 1140-1153 (KILGLEDNDQNNTE). A helical membrane pass occupies residues 1154–1171 (LGALVFNCFVFCQIFNQL). The Cytoplasmic portion of the chain corresponds to 1172–1191 (NCRRLDRKLNVLEGFWRNWY). Residues 1192 to 1212 (FIIIFLIMVGGQILIVEVGGA) form a helical membrane-spanning segment. Glutamate 1208 provides a ligand contact to Ca(2+). At 1213–1223 (AFQVTRLGGRD) the chain is on the vacuolar side. The chain crosses the membrane as a helical span at residues 1224–1244 (WGITLVIGALSLPIGALVRLT). The Cytoplasmic portion of the chain corresponds to 1245–1414 (PTGPFARLLV…GLSSGDANNV (170 aa)). The tract at residues 1376–1414 (PRTNPDDPLYAKFGLQPPESRGSSVSGAEGLSSGDANNV) is disordered.

Belongs to the cation transport ATPase (P-type) (TC 3.A.3) family.

It localises to the vacuole membrane. It carries out the reaction Ca(2+)(in) + ATP + H2O = Ca(2+)(out) + ADP + phosphate + H(+). Functionally, this magnesium-dependent enzyme catalyzes the hydrolysis of ATP coupled with the transport of calcium. Transports calcium to the vacuole and participates in the control of cytosolic free calcium. The polypeptide is Calcium-transporting ATPase 2 (Cryptococcus neoformans var. grubii serotype A (strain H99 / ATCC 208821 / CBS 10515 / FGSC 9487) (Filobasidiella neoformans var. grubii)).